Reading from the N-terminus, the 114-residue chain is Flagellar hook-basal body complex protein FliE (114 aa).

This sequence belongs to the FliE family.

It localises to the bacterial flagellum basal body. The polypeptide is Flagellar hook-basal body complex protein FliE (Burkholderia cenocepacia (strain ATCC BAA-245 / DSM 16553 / LMG 16656 / NCTC 13227 / J2315 / CF5610) (Burkholderia cepacia (strain J2315))).